The sequence spans 335 residues: MVRRDRLRRMREWWVQVGLLAVPLLAAYLHIPPPQLSPALHSWKSSGKFFTYKGLRIFYQDSVGVVGSPEIVVLLHGFPTSSYDWYKIWEGLTLRFHRVIALDFLGFGFSDKPRPHHYSIFEQASIVEALLRHLGLQNRRINLLSHDYGDIVAQELLYRYKQNRSGRLTIKSLCLSNGGIFPETHRPLLLQKLLKDGGVLSPILTRLMNFFVFSRGLTPVFGPYTRPSESELWDMWAGIRNNDGNLVIDSLLQYINQRKKFRRRWVGALASVTIPIHFIYGPLDPVNPYPEFLELYRKTLPRSTVSILDDHISHYPQLEDPMGFLNAYMGFINSF.

A run of 2 helical transmembrane segments spans residues 13 to 33 (WWVQ…HIPP) and 63 to 83 (VGVV…TSSY). Positions 71-310 (IVVLLHGFPT…PRSTVSILDD (240 aa)) constitute an AB hydrolase-1 domain. The RVIALD motif lies at 98 to 103 (RVIALD). A glycan (N-linked (GlcNAc...) asparagine) is linked at N163. The chain crosses the membrane as a helical span at residues 266–286 (VGALASVTIPIHFIYGPLDPV).

It belongs to the AB hydrolase superfamily. Highly expressed in hydatidiform moles, but barely expressed in dermoid cysts. Biallelic expression is detected in blood lymphocytes. Seems to imprinted in an isoform-specific manner rather than in a tissue-specific manner in lymphocytes. Isoform 1 is expressed only from the paternal allele. Isoform 2 is expressed from both the paternal allele and the maternal allele.

Its subcellular location is the endoplasmic reticulum membrane. In Homo sapiens (Human), this protein is Mesoderm-specific transcript homolog protein (MEST).